The sequence spans 791 residues: ATP-dependent 6-phosphofructokinase, platelet type (791 aa).

Position 1 is an N-acetylmethionine (methionine 1). The N-terminal catalytic PFK domain 1 stretch occupies residues 1-399 (MDNKVSASPR…NLNTYKRLAI (399 aa)). At serine 6 the chain carries Phosphoserine. Serine 12 carries the phosphoserine; by PKA modification. Position 21 is a phosphoserine (serine 21). Residues glycine 34, 97-98 (RS), and 127-130 (GSGS) each bind ATP. At serine 142 the chain carries Phosphoserine. Residues 173 to 175 (SID), arginine 210, 217 to 219 (MGR), glutamate 273, arginine 301, and 307 to 310 (HVQR) each bind substrate. Aspartate 175 serves as the catalytic Proton acceptor. Position 386 is a phosphoserine (serine 386). Position 395 is an N6-acetyllysine (lysine 395). Residues 400–411 (KLPDDKIQKSNC) are interdomain linker. Positions 412–791 (NVAVINVGAP…RGGPEEPAAI (380 aa)) are C-terminal regulatory PFK domain 2. Residue arginine 481 coordinates beta-D-fructose 2,6-bisphosphate. At lysine 486 the chain carries N6-acetyllysine. Beta-D-fructose 2,6-bisphosphate contacts are provided by residues 538 to 542 (TVSNN), arginine 576, 583 to 585 (MGG), and glutamate 639. Serine 540 carries O-linked (GlcNAc) serine glycosylation. Tyrosine 651 carries the post-translational modification Phosphotyrosine. Residues arginine 665 and 671–674 (HMQQ) contribute to the beta-D-fructose 2,6-bisphosphate site. Residue lysine 688 is modified to N6-acetyllysine. A beta-D-fructose 2,6-bisphosphate-binding site is contributed by arginine 744.

Belongs to the phosphofructokinase type A (PFKA) family. ATP-dependent PFK group I subfamily. Eukaryotic two domain clade 'E' sub-subfamily. Homo- and heterotetramers. Phosphofructokinase (PFK) enzyme functions as a tetramer composed of different combinations of 3 types of subunits, called PFKM (M), PFKL (L) and PFKP (P). The composition of the PFK tetramer differs according to the tissue type it is present in. The kinetic and regulatory properties of the tetrameric enzyme are dependent on the subunit composition, hence can vary across tissues. Interacts with ATG4B; promoting phosphorylation of ATG4B. Mg(2+) is required as a cofactor. GlcNAcylation decreases enzyme activity. In terms of processing, phosphorylation at Ser-386 promotes interaction with ATG4B.

It localises to the cytoplasm. The enzyme catalyses beta-D-fructose 6-phosphate + ATP = beta-D-fructose 1,6-bisphosphate + ADP + H(+). The protein operates within carbohydrate degradation; glycolysis; D-glyceraldehyde 3-phosphate and glycerone phosphate from D-glucose: step 3/4. Allosterically activated by ADP, AMP, or fructose 2,6-bisphosphate, and allosterically inhibited by ATP or citrate. Functionally, catalyzes the phosphorylation of D-fructose 6-phosphate to fructose 1,6-bisphosphate by ATP, the first committing step of glycolysis. In Oryctolagus cuniculus (Rabbit), this protein is ATP-dependent 6-phosphofructokinase, platelet type (PFKP).